The sequence spans 887 residues: PAN2-PAN3 deadenylation complex subunit Pan3 (887 aa).

The C3H1-type zinc-finger motif lies at 49-77; it reads GVKLKYCRYYAKDKTCFYGEECQFLHEDP. Disordered regions lie at residues 111 to 139, 280 to 307, and 321 to 393; these read GGGA…GLDG, ENNL…SNVS, and PSMG…GQVI. A necessary and sufficient for interaction with PABPC1 but not needed for interaction with PAN2 region spans residues 147–498; that stretch reads MDGGALTDAS…PPPNRIQKSS (352 aa). Polar residues-rich tracts occupy residues 281-290 and 298-307; these read NNLQTPNPTA and GSTSRLSNVS. The PABPC-interacting motif-2 (PAM-2) motif lies at 284-299; the sequence is QTPNPTASEFIPKGGS. 2 positions are modified to phosphoserine: serine 354 and serine 361. The interval 463–750 is pseudokinase domain; sequence QIDQADMPAV…SVNDIMPMIG (288 aa). ATP contacts are provided by residues arginine 521, 570 to 577, and 644 to 645; these read DFHAGGET and TK. The interval 789-887 is knob domain; it reads TINERPEFQK…ELIAAANGQL (99 aa).

The protein belongs to the protein kinase superfamily. PAN3 family. In terms of assembly, homodimer. Forms a heterotrimer with a catalytic subunit PAN2 to form the poly(A)-nuclease (PAN) deadenylation complex. Interacts (via PAM-2 motif) with poly(A)-binding protein PABPC1 (via PABC domain), conferring substrate specificity of the enzyme complex. Interacts with the GW182 family proteins TNRC6A, TNRC6B and TNRC6C. Interacts with YTHDF3. As to quaternary structure, interacts with PAN2. Interacts (via N-terminus) with PABPC1 at lower efficiency than isoform 3. Interacts with PAN2. Interacts (via N-terminus) with PABPC1 at higher efficiency than isoform 1.

The protein resides in the cytoplasm. Its subcellular location is the P-body. It is found in the nucleus. In terms of biological role, regulatory subunit of the poly(A)-nuclease (PAN) deadenylation complex, one of two cytoplasmic mRNA deadenylases involved in general and miRNA-mediated mRNA turnover. PAN specifically shortens poly(A) tails of RNA and the activity is stimulated by poly(A)-binding protein (PABP). PAN deadenylation is followed by rapid degradation of the shortened mRNA tails by the CCR4-NOT complex. Deadenylated mRNAs are then degraded by two alternative mechanisms, namely exosome-mediated 3'-5' exonucleolytic degradation, or deadenylation-dependent mRNA decapping and subsequent 5'-3' exonucleolytic degradation by XRN1. PAN3 acts as a regulator for PAN activity, recruiting the catalytic subunit PAN2 to mRNA via its interaction with RNA and PABP, and to miRNA targets via its interaction with GW182 family proteins. Decreases PAN2-mediated deadenylation, possibly by preventing progression into the second CCR4-NOT mediated stage of biphasic deadenylation. Has a significant effect on mRNA stability, generally stabilizing a subset of the transcriptome. Stabilizes mRNAs degraded by the AU-rich element (ARE)-mediated mRNA decay pathway but promotes degradation of mRNAs by the microRNA-mediated pathway. Its activity influences mRNP remodeling, specifically reducing formation of a subset of P-bodies containing GW220, an isoform of TNRC6A. Its function is as follows. Enhances PAN2 deadenylase activity and has an extensive effect on mRNA stability, generally enhancing mRNA decay across the transcriptome by multiple pathways, including the AU-rich element (ARE)-mediated pathway, microRNA-mediated pathway and the nonsense-mediated pathway (NMD). Its activity is required for efficient P-body formation. May be involved in regulating mRNAs of genes involved in cell cycle progression and cell proliferation. The protein is PAN2-PAN3 deadenylation complex subunit Pan3 of Mus musculus (Mouse).